Here is a 106-residue protein sequence, read N- to C-terminus: Small ribosomal subunit protein uS10 (106 aa).

The protein belongs to the universal ribosomal protein uS10 family. As to quaternary structure, part of the 30S ribosomal subunit.

Involved in the binding of tRNA to the ribosomes. This is Small ribosomal subunit protein uS10 from Parasynechococcus marenigrum (strain WH8102).